Here is a 333-residue protein sequence, read N- to C-terminus: Homeobox protein engrailed-1 (333 aa).

Positions 1–14 (MEEPPEGHGHHRDA) are enriched in basic and acidic residues. 2 disordered regions span residues 1-184 (MEEP…AAKY) and 226-247 (RPSSPRTRKLKKKKTEKEDKRP). Gly residues predominate over residues 20–31 (ANGGGGGGGGSD). The segment covering 38–66 (SPSPAPASPAAPCPLPLPRRRPPPPPPPR) has biased composition (pro residues). Over residues 94 to 104 (TGAGGGGGGGG) the composition is skewed to gly residues. The segment covering 144–173 (DGSAPAGTAAKANPGTAAGAAGAAGAAKAQ) has biased composition (low complexity). Positions 244–303 (DKRPRTAFTAEQLQRLKAEFQANRYITEQRRQSLAQELSLNESRVKIWFQNKRAKIKKAT) form a DNA-binding region, homeobox.

This sequence belongs to the engrailed homeobox family.

It localises to the nucleus. Required for proper formation of the apical ectodermal ridge and correct dorsal-ventral patterning in the limb. In Gallus gallus (Chicken), this protein is Homeobox protein engrailed-1 (EN1).